A 102-amino-acid polypeptide reads, in one-letter code: Protamine-2 (102 aa).

A disordered region spans residues 1 to 102; that stretch reads MVRYRVRSPS…RTRRRTCRKH (102 aa). 3 positions are modified to phosphoserine: S8, S10, and S37. Positions 39 to 48 are enriched in basic and acidic residues; that stretch reads EHVEVYERTH. A compositionally biased stretch (basic residues) spans 49–102; sequence GHSHYRRRHCSRRRLRRIHRQQHRSCRRRKRRSCRHRRRHRRGCRTRRRTCRKH.

It belongs to the protamine P2 family. Interacts with TDRP. In terms of processing, proteolytic processing into mature chains is required for histone eviction during spermatogenesis. Transition proteins (TNP1 and TNP2) are required for processing. Testis.

It localises to the nucleus. The protein localises to the chromosome. Its function is as follows. Protamines substitute for histones in the chromatin of sperm during the haploid phase of spermatogenesis. They compact sperm DNA into a highly condensed, stable and inactive complex. This chain is Protamine-2 (PRM2), found in Pan paniscus (Pygmy chimpanzee).